An 86-amino-acid polypeptide reads, in one-letter code: Neurotoxin homolog NL1 (86 aa).

The first 21 residues, 1-21, serve as a signal peptide directing secretion; the sequence is MKTLLLTLVVVTMVCMDLGYT. 4 disulfide bridges follow: C24–C45, C38–C62, C66–C78, and C79–C84.

This sequence belongs to the three-finger toxin family. Short-chain subfamily. Orphan group VIII (haditoxin) sub-subfamily. Homodimer; non-covalently linked. In terms of tissue distribution, expressed by the venom gland.

The protein resides in the secreted. Its function is as follows. Antagonist of muscle and neuronal nicotinic acetylcholine receptors (nAChR) with highest affinity for neuronal alpha-7/CHRNA7 nAChRs. This is Neurotoxin homolog NL1 from Naja atra (Chinese cobra).